A 298-amino-acid chain; its full sequence is Interferon-inducible double-stranded RNA-dependent protein kinase activator A homolog B (298 aa).

DRBM domains are found at residues 20–87, 112–180, and 225–293; these read TPIQ…ILRG, NPVG…KFKT, and DYVK…YLKI.

This sequence belongs to the PRKRA family. In terms of assembly, homodimer. Interacts with dicer1 and eif2ak2/pkr. Also able to interact with dsRNA. Associates with ribosomes. As to expression, expressed in brain, heart, kidney, liver, nerve and spleen.

It localises to the cytoplasm. The protein localises to the perinuclear region. The protein resides in the nucleus. It is found in the nucleolus. Functionally, activates eif2ak2/pkr in the absence of double-stranded RNA (dsRNA), leading to phosphorylation of eif2s1/efi2-alpha and inhibition of translation and induction of apoptosis. Required for siRNA production by dicer1 and for subsequent siRNA-mediated post-transcriptional gene silencing. Does not seem to be required for processing of pre-miRNA to miRNA by dicer1. This Xenopus laevis (African clawed frog) protein is Interferon-inducible double-stranded RNA-dependent protein kinase activator A homolog B (prkra-b).